A 248-amino-acid chain; its full sequence is Caffeoyl-CoA O-methyltransferase 3 (248 aa).

Position 22 (Lys22) interacts with substrate. Residues Thr64, Glu86, 88–89, Ser94, Asp112, and Ala141 each bind S-adenosyl-L-methionine; that span reads GV. Asp164 lines the substrate pocket. Asp164 contacts a divalent metal cation. Asp166 serves as a coordination point for S-adenosyl-L-methionine. A divalent metal cation-binding residues include Asp190 and Asn191. Asn195 is a binding site for substrate.

This sequence belongs to the class I-like SAM-binding methyltransferase superfamily. Cation-dependent O-methyltransferase family. CCoAMT subfamily. A divalent metal cation serves as cofactor. In terms of tissue distribution, mostly expressed in petal limbs and tubes, and, at low levels, in stems, roots and leaves.

The protein resides in the cytoplasm. The protein localises to the cytosol. The enzyme catalyses (E)-caffeoyl-CoA + S-adenosyl-L-methionine = (E)-feruloyl-CoA + S-adenosyl-L-homocysteine + H(+). It carries out the reaction (E)-5-hydroxyferuloyl-CoA + S-adenosyl-L-methionine = (E)-sinapoyl-CoA + S-adenosyl-L-homocysteine + H(+). It participates in aromatic compound metabolism; phenylpropanoid biosynthesis. Involved in the production of floral volatile phenylpropanoids in flowers of fragrant cultivars (e.g. cv. Mitchell and cv. V26) from cinnamic acid, a common precursor with the anthocyanin biosynthesis pathway involved in flower pigmentation. Methylates caffeoyl-CoA to feruloyl-CoA, also able to methylate 5-hydroxyferuloyl-CoA. The polypeptide is Caffeoyl-CoA O-methyltransferase 3 (Petunia hybrida (Petunia)).